Reading from the N-terminus, the 727-residue chain is AN1-type zinc finger protein 4 (727 aa).

The Ubiquitin-like domain maps to 28 to 103 (MELFIETLTG…LKLVLAMRGG (76 aa)). 2 disordered regions span residues 187–217 (HRMSGGSMYNSDTDEDEETEPSSSGQQIIEN) and 238–264 (KKPKKAVKIKPHPPVAPRPSSGSTAPS). A compositionally biased stretch (basic residues) spans 238-248 (KKPKKAVKIKP). The AN1-type zinc finger occupies 661 to 708 (KKTTNHCFLCGKKTGLASSYECRCGNNFCASHRYAETHGCTYDYKSAG). Residues cysteine 667, cysteine 670, cysteine 682, cysteine 684, cysteine 689, histidine 692, histidine 698, and cysteine 700 each coordinate Zn(2+).

This Homo sapiens (Human) protein is AN1-type zinc finger protein 4 (ZFAND4).